The sequence spans 423 residues: Serine--tRNA ligase (423 aa).

Residue 231–233 (TGE) coordinates L-serine. Position 262–264 (262–264 (RSE)) interacts with ATP. Residue Glu-285 coordinates L-serine. 349 to 352 (EISS) contacts ATP. Ser-385 provides a ligand contact to L-serine.

The protein belongs to the class-II aminoacyl-tRNA synthetase family. Type-1 seryl-tRNA synthetase subfamily. As to quaternary structure, homodimer. The tRNA molecule binds across the dimer.

The protein localises to the cytoplasm. It catalyses the reaction tRNA(Ser) + L-serine + ATP = L-seryl-tRNA(Ser) + AMP + diphosphate + H(+). The enzyme catalyses tRNA(Sec) + L-serine + ATP = L-seryl-tRNA(Sec) + AMP + diphosphate + H(+). It participates in aminoacyl-tRNA biosynthesis; selenocysteinyl-tRNA(Sec) biosynthesis; L-seryl-tRNA(Sec) from L-serine and tRNA(Sec): step 1/1. In terms of biological role, catalyzes the attachment of serine to tRNA(Ser). Is also able to aminoacylate tRNA(Sec) with serine, to form the misacylated tRNA L-seryl-tRNA(Sec), which will be further converted into selenocysteinyl-tRNA(Sec). The sequence is that of Serine--tRNA ligase from Coxiella burnetii (strain CbuG_Q212) (Coxiella burnetii (strain Q212)).